Here is a 989-residue protein sequence, read N- to C-terminus: SWI/SNF-related matrix-associated actin-dependent regulator of chromatin subfamily A containing DEAD/H box 1 homolog (989 aa).

The segment at 1 to 288 (MSTTSDFQTG…RRAKRGETKN (288 aa)) is disordered. Positions 72–105 (DDDDEDYVDETMPSEDEEDFDNNEEDEDDDDYEE) are enriched in acidic residues. Residues 109–120 (RKRKAPSKKKLV) show a composition bias toward basic residues. A compositionally biased stretch (basic and acidic residues) spans 124–140 (ENYRREDSETPEPEMKR). Over residues 187 to 200 (DDESEDDFINDEEI) the composition is skewed to acidic residues. Basic and acidic residues-rich tracts occupy residues 201-221 (SEKGSGKGSEKEESEGSGKDS) and 241-250 (AQKEQKKKAE). The segment covering 251–276 (SDEDWEEDEDDMNADGDETPSDDSDI) has biased composition (acidic residues). Residues 277 to 288 (EERRAKRGETKN) show a composition bias toward basic and acidic residues. A Helicase ATP-binding domain is found at 406–574 (IMMYNKDLNA…ISLMYFVLSK (169 aa)). Residue 419-426 (DEMGLGKT) participates in ATP binding. A DEGH box motif is present at residues 525–528 (DEGH). The region spanning 757–912 (QLDVMLPEIQ…GVKGQLDEDA (156 aa)) is the Helicase C-terminal domain. Residues 941–989 (RYDDVEDDSGDSKNGIDAEEAAKKEDEAVKEPVEKEQQKEEESQPSTSA) are disordered. The span at 950 to 982 (GDSKNGIDAEEAAKKEDEAVKEPVEKEQQKEEE) shows a compositional bias: basic and acidic residues.

Belongs to the SNF2/RAD54 helicase family.

The protein resides in the nucleus. The protein localises to the chromosome. It carries out the reaction ATP + H2O = ADP + phosphate + H(+). Functionally, DNA helicase that possesses intrinsic ATP-dependent nucleosome-remodeling activity and is both required for DNA repair and heterochromatin organization. Promotes DNA end resection of double-strand breaks (DSBs) following DNA damage: probably acts by weakening histone DNA interactions in nucleosomes flanking DSBs. The sequence is that of SWI/SNF-related matrix-associated actin-dependent regulator of chromatin subfamily A containing DEAD/H box 1 homolog from Caenorhabditis elegans.